The chain runs to 213 residues: Putative nascent polypeptide-associated complex subunit alpha-like protein (213 aa).

The interval 1-46 (MPGEATETVPAIEQQLLQPQAETGSGTESDSDESVPELEEQDSTQV) is disordered. Polar residues predominate over residues 15–28 (QLLQPQAETGSGTE). The span at 29–42 (SDSDESVPELEEQD) shows a compositional bias: acidic residues. A phosphoserine mark is found at Ser43 and Ser131. One can recognise an NAC-A/B domain in the interval 69–134 (RRSEKKARKA…AKIEDLSQEA (66 aa)). Residue Lys141 is modified to N6-acetyllysine; alternate. A Glycyl lysine isopeptide (Lys-Gly) (interchain with G-Cter in SUMO2); alternate cross-link involves residue Lys141. Position 160 is a phosphothreonine (Thr160). Phosphoserine occurs at positions 165, 185, and 201. The UBA domain maps to 175–211 (VEIKDIELVLSQANVWGAKAVRALKNSNDIVNAIMEL). Thr212 is subject to Phosphothreonine.

This sequence belongs to the NAC-alpha family.

This chain is Putative nascent polypeptide-associated complex subunit alpha-like protein, found in Homo sapiens (Human).